Consider the following 253-residue polypeptide: Probable U3 small nucleolar RNA-associated protein 11 (253 aa).

Residues 1-21 (MAAAFRKAVKSRQREYRERSQ) are disordered. Glycyl lysine isopeptide (Lys-Gly) (interchain with G-Cter in SUMO2) cross-links involve residues Lys-74, Lys-83, and Lys-86. Thr-90 is modified (phosphothreonine). Glycyl lysine isopeptide (Lys-Gly) (interchain with G-Cter in SUMO2) cross-links involve residues Lys-103, Lys-120, Lys-143, Lys-144, Lys-180, Lys-211, Lys-218, Lys-235, and Lys-236. Ser-241 carries the phosphoserine modification. Lys-246 is covalently cross-linked (Glycyl lysine isopeptide (Lys-Gly) (interchain with G-Cter in SUMO2)).

It belongs to the UTP11 family. In terms of assembly, part of the small subunit (SSU) processome, composed of more than 70 proteins and the RNA chaperone small nucleolar RNA (snoRNA) U3.

The protein localises to the nucleus. It is found in the nucleolus. Part of the small subunit (SSU) processome, first precursor of the small eukaryotic ribosomal subunit. During the assembly of the SSU processome in the nucleolus, many ribosome biogenesis factors, an RNA chaperone and ribosomal proteins associate with the nascent pre-rRNA and work in concert to generate RNA folding, modifications, rearrangements and cleavage as well as targeted degradation of pre-ribosomal RNA by the RNA exosome. Involved in nucleolar processing of pre-18S ribosomal RNA. The chain is Probable U3 small nucleolar RNA-associated protein 11 from Rattus norvegicus (Rat).